A 387-amino-acid chain; its full sequence is Bifunctional chorismate mutase/prephenate dehydratase (387 aa).

Residues 1–92 (MNPDNPLLAL…DSVLTQQALL (92 aa)) enclose the Chorismate mutase domain. Residues Arg11, Arg28, Lys39, Asp48, Glu52, Ser84, and Gln88 each contribute to the substrate site. The Prephenate dehydratase domain occupies 105-285 (RIAFLGPKGS…NHTRFIVLAR (181 aa)). The region spanning 299–376 (TLIMATGQQA…RSLKVLGCYP (78 aa)) is the ACT domain.

Its subcellular location is the cytoplasm. The enzyme catalyses chorismate = prephenate. It carries out the reaction prephenate + H(+) = 3-phenylpyruvate + CO2 + H2O. The protein operates within amino-acid biosynthesis; L-phenylalanine biosynthesis; phenylpyruvate from prephenate: step 1/1. Its pathway is metabolic intermediate biosynthesis; prephenate biosynthesis; prephenate from chorismate: step 1/1. Its function is as follows. Catalyzes the Claisen rearrangement of chorismate to prephenate and the decarboxylation/dehydration of prephenate to phenylpyruvate. This chain is Bifunctional chorismate mutase/prephenate dehydratase (pheA), found in Enterobacter agglomerans (Erwinia herbicola).